The primary structure comprises 70 residues: MESVLQKIDDLEMKLSFQDISIEELNQEVIKLNALVARQQQQMLLMVNKLHSIEPSNMASSAEETPPPHY.

It belongs to the SlyX family.

In Shewanella frigidimarina (strain NCIMB 400), this protein is Protein SlyX homolog.